Here is a 682-residue protein sequence, read N- to C-terminus: MPRERQKRGRRAEAKRKRDDEVGDRTAPKRQKASEGDNDFNPLHSQAKIGDDYIPLEEEPASSMDTPFYGLLDPDEQEYFSHASGLLELNQFETEEEKSIFIERVYEEADGKELKIACSQSCSRLMEKLISASTVSQIKSLFNKFVGQFLNLVQHRFASHCCESLFLRAAPYVTLEMKKNSAEKNDNECEDSSANLRLEDLFLAVLSELEGNWGYLLTERFASHTIRVLLLILAGEQLDNPSKATVIASRKKENLDKPKVTQRDKSASDRRAVPPSFNAALEKMMNDLVTGLDNTYLRALATHPVGNPVLQVLLSVELTHLGKSKARDPDSVFRRLVPDENLEEGSESAAFIKGLFYDPVGSRLLETMVQLAPGKFFKTFYKALVLERIGSLSRNEIAGHVVARILERLSKEDLKSSMDLILPEVLSLVKRSRFTVIKTLIERGVIRGVDLRPLADSLLLAFGTDPIARINNVLKLHHLNEENDDTKRSSKNSTPEQLHGSLLAQTMLKAPGPLSELIQSSLLAVTLETLIAIAKDPVASHVLQDALTLPTSTIQFRRQITSRFSGKMAELALDSSGSHVVDAVWSATENLIFIKQRFAEELLANERPLRDSFVGRAVWKNWSMDLYKRRRGHWIAVAKGLESVNPSNSENRQPPKSNLDLARARFAEKSNTSTPKKISATF.

The span at 1 to 15 (MPRERQKRGRRAEAK) shows a compositional bias: basic residues. Positions 1–46 (MPRERQKRGRRAEAKRKRDDEVGDRTAPKRQKASEGDNDFNPLHSQ) are disordered. Residues 16 to 35 (RKRDDEVGDRTAPKRQKASE) are compositionally biased toward basic and acidic residues. One copy of the Pumilio 1 repeat lies at 108–143 (EADGKELKIACSQSCSRLMEKLISASTVSQIKSLFN). Positions 249 to 272 (SRKKENLDKPKVTQRDKSASDRRA) are disordered. Over residues 250–272 (RKKENLDKPKVTQRDKSASDRRA) the composition is skewed to basic and acidic residues. Pumilio repeat units lie at residues 347–382 (ESAA…TFYK), 383–419 (ALVL…SSMD), 524–562 (AVTL…QITS), and 563–600 (RFSG…RFAE).

It belongs to the NOP9 family.

It localises to the nucleus. The protein localises to the nucleolus. In terms of biological role, RNA-binding nucleolar protein required for pre-rRNA processing. Involved in production of 18S rRNA and assembly of small ribosomal subunit. This is Nucleolar protein 9 (NOP9) from Blastomyces gilchristii (strain SLH14081) (Blastomyces dermatitidis).